The primary structure comprises 291 residues: Phytanoyl-CoA dioxygenase domain-containing protein 1 (291 aa).

Thr55 carries the phosphothreonine modification. 2-oxoglutarate-binding positions include Lys102, Met141, His156–Asp158, and Trp174. Positions 156 and 158 each coordinate Fe cation. His246 is a Fe cation binding site. 2-oxoglutarate contacts are provided by Ser248 and Arg257.

It belongs to the PhyH family. PHYHD1 subfamily. Fe cation serves as cofactor.

Functionally, 2-oxoglutarate(2OG)-dependent dioxygenase that catalyzes the conversion of 2-oxoglutarate to succinate and CO(2) in an iron-dependent manner. However, does not couple 2OG turnover to the hydroxylation of acyl-coenzyme A derivatives, implying that it is not directly involved in phytanoyl coenzyme-A metabolism. Does not show detectable activity towards fatty acid CoA thioesters. The sequence is that of Phytanoyl-CoA dioxygenase domain-containing protein 1 from Mus musculus (Mouse).